We begin with the raw amino-acid sequence, 165 residues long: Transcription elongation factor GreA (165 aa).

A coiled-coil region spans residues 55-78 (AAKEEQGKQELRVRQLTQLLENAK).

The protein belongs to the GreA/GreB family.

Its function is as follows. Necessary for efficient RNA polymerase transcription elongation past template-encoded arresting sites. The arresting sites in DNA have the property of trapping a certain fraction of elongating RNA polymerases that pass through, resulting in locked ternary complexes. Cleavage of the nascent transcript by cleavage factors such as GreA or GreB allows the resumption of elongation from the new 3'terminus. GreA releases sequences of 2 to 3 nucleotides. This Streptomyces avermitilis (strain ATCC 31267 / DSM 46492 / JCM 5070 / NBRC 14893 / NCIMB 12804 / NRRL 8165 / MA-4680) protein is Transcription elongation factor GreA.